The chain runs to 338 residues: Aspartate carbamoyltransferase catalytic subunit (338 aa).

2 residues coordinate carbamoyl phosphate: R72 and T73. K100 lines the L-aspartate pocket. The carbamoyl phosphate site is built by R122, H152, and Q155. R186 and R243 together coordinate L-aspartate. Carbamoyl phosphate-binding residues include G284 and P285.

The protein belongs to the aspartate/ornithine carbamoyltransferase superfamily. ATCase family. Heterododecamer (2C3:3R2) of six catalytic PyrB chains organized as two trimers (C3), and six regulatory PyrI chains organized as three dimers (R2).

It carries out the reaction carbamoyl phosphate + L-aspartate = N-carbamoyl-L-aspartate + phosphate + H(+). It participates in pyrimidine metabolism; UMP biosynthesis via de novo pathway; (S)-dihydroorotate from bicarbonate: step 2/3. Functionally, catalyzes the condensation of carbamoyl phosphate and aspartate to form carbamoyl aspartate and inorganic phosphate, the committed step in the de novo pyrimidine nucleotide biosynthesis pathway. This is Aspartate carbamoyltransferase catalytic subunit from Acinetobacter baumannii (strain ACICU).